The chain runs to 317 residues: MRILLANPRGFCAGVDRAISIVERALAIYGAPIYVRHEVVHNRFVVNDLRERGAVFIEEISEVPDGAILIFSAHGVSQAVRAEAKARHLTMLFDATCPLVTKVHMEVARASRRGTEAILIGHAGHPEVEGTMGQYSNPQGGMYLVESPQDVWQLQVKDEQNLCFMTQTTLSVDDTSEVIDALRARFPAIVGPRKDDICYATTNRQEAVRSLAVQADVVLVVGSKNSSNSNRLAELARRAGRAAYLIDSASDIDDAWLSGVGCVGVTAGASAPDVLVREVIDRLQALGGAAAQEIQGREENIVFEVPRELRIEVQQAD.

A [4Fe-4S] cluster-binding site is contributed by C12. Residues H41 and H74 each coordinate (2E)-4-hydroxy-3-methylbut-2-enyl diphosphate. Dimethylallyl diphosphate is bound by residues H41 and H74. Residues H41 and H74 each coordinate isopentenyl diphosphate. C97 lines the [4Fe-4S] cluster pocket. (2E)-4-hydroxy-3-methylbut-2-enyl diphosphate is bound at residue H125. H125 contributes to the dimethylallyl diphosphate binding site. H125 serves as a coordination point for isopentenyl diphosphate. The Proton donor role is filled by E127. T168 provides a ligand contact to (2E)-4-hydroxy-3-methylbut-2-enyl diphosphate. Position 198 (C198) interacts with [4Fe-4S] cluster. Positions 226, 227, 228, and 270 each coordinate (2E)-4-hydroxy-3-methylbut-2-enyl diphosphate. S226, S227, N228, and S270 together coordinate dimethylallyl diphosphate. Positions 226, 227, 228, and 270 each coordinate isopentenyl diphosphate.

It belongs to the IspH family. As to quaternary structure, homodimer. [4Fe-4S] cluster is required as a cofactor.

It carries out the reaction isopentenyl diphosphate + 2 oxidized [2Fe-2S]-[ferredoxin] + H2O = (2E)-4-hydroxy-3-methylbut-2-enyl diphosphate + 2 reduced [2Fe-2S]-[ferredoxin] + 2 H(+). It catalyses the reaction dimethylallyl diphosphate + 2 oxidized [2Fe-2S]-[ferredoxin] + H2O = (2E)-4-hydroxy-3-methylbut-2-enyl diphosphate + 2 reduced [2Fe-2S]-[ferredoxin] + 2 H(+). The protein operates within isoprenoid biosynthesis; dimethylallyl diphosphate biosynthesis; dimethylallyl diphosphate from (2E)-4-hydroxy-3-methylbutenyl diphosphate: step 1/1. It functions in the pathway isoprenoid biosynthesis; isopentenyl diphosphate biosynthesis via DXP pathway; isopentenyl diphosphate from 1-deoxy-D-xylulose 5-phosphate: step 6/6. Catalyzes the conversion of 1-hydroxy-2-methyl-2-(E)-butenyl 4-diphosphate (HMBPP) into a mixture of isopentenyl diphosphate (IPP) and dimethylallyl diphosphate (DMAPP). Acts in the terminal step of the DOXP/MEP pathway for isoprenoid precursor biosynthesis. The polypeptide is 4-hydroxy-3-methylbut-2-enyl diphosphate reductase (Edwardsiella ictaluri (strain 93-146)).